We begin with the raw amino-acid sequence, 638 residues long: Growth hormone receptor (638 aa).

A signal peptide spans 1-18 (MDLWRVFLTLALAVSSDM). Residues 19–265 (FPGSGATPAT…TLAACEEDFR (247 aa)) lie on the Extracellular side of the membrane. Intrachain disulfides connect C56–C66 and C101–C112. N115 carries N-linked (GlcNAc...) asparagine glycosylation. Cysteines 126 and 140 form a disulfide. Positions 151–254 (PPIGLNWTLL…EVLRVTFPQM (104 aa)) constitute a Fibronectin type-III domain. Residues N156, N161, and N200 are each glycosylated (N-linked (GlcNAc...) asparagine). The WSXWS motif motif lies at 240–244 (YSEFS). Residues 266–289 (FPWFLIIIFGIFGVAVMLFVVIFS) form a helical membrane-spanning segment. Topologically, residues 290-638 (KQQRIKMLIL…STDQLNKIMQ (349 aa)) are cytoplasmic. Residues 295–380 (KMLILPPVPV…QEKSAGILGA (86 aa)) form a required for JAK2 binding region. A Box 1 motif motif is present at residues 298-306 (ILPPVPVPK). Residues 341–350 (DSWVEFIELD) carry the UbE motif motif. Position 342 is a phosphoserine (S342). A disordered region spans residues 357 to 389 (KTEESDTDRLLSDDQEKSAGILGAKDDDSGRTS). Positions 363–373 (TDRLLSDDQEK) are enriched in basic and acidic residues. Residues Y487 and Y594 each carry the phosphotyrosine modification.

Belongs to the type I cytokine receptor family. Type 1 subfamily. On growth hormone (GH) binding, forms homodimers and binds JAK2 via a box 1-containing domain. Post-translationally, the soluble form (GHBP) is produced by phorbol ester-promoted proteolytic cleavage at the cell surface (shedding) by ADAM17/TACE. Shedding is inhibited by growth hormone (GH) binding to the receptor probably due to a conformational change in GHR rendering the receptor inaccessible to ADAM17. In terms of processing, on GH binding, phosphorylated on tyrosine residues in the cytoplasmic domain by JAK2. Phosphorylation on either (or all of) Tyr-534, Tyr-566 and/or Tyr-627 is required for STAT5 activation. Phosphorylation on Tyr-333 would seem necessary for JAK2 activation. Ubiquitinated by the ECS(SOCS2) complex following ligand-binding and phosphorylation by JAK2, leading to its degradation by the proteasome. Regulation by the ECS(SOCS2) complex acts as a negative feedback loop of growth hormone receptor signaling. Ubiquitination is not sufficient for GHR internalization. As to expression, highest expression in liver. Also expressed in heart, kidney and muscle.

Its subcellular location is the cell membrane. It is found in the secreted. Its function is as follows. Receptor for pituitary gland growth hormone involved in regulating postnatal body growth. On ligand binding, couples to, and activates the JAK2/STAT5 pathway. In terms of biological role, receptor for pituitary gland growth hormone (GH1) involved in regulating postnatal body growth. On ligand binding, couples to the JAK2/STAT5 pathway. Functionally, the soluble form (GHBP) acts as a reservoir of growth hormone in plasma and may be a modulator/inhibitor of GH signaling. This is Growth hormone receptor (Ghr) from Rattus norvegicus (Rat).